We begin with the raw amino-acid sequence, 41 residues long: Large ribosomal subunit protein bL36 (41 aa).

This sequence belongs to the bacterial ribosomal protein bL36 family.

In Bartonella quintana (strain Toulouse) (Rochalimaea quintana), this protein is Large ribosomal subunit protein bL36.